We begin with the raw amino-acid sequence, 480 residues long: Aspartyl/glutamyl-tRNA(Asn/Gln) amidotransferase subunit B (480 aa).

Belongs to the GatB/GatE family. GatB subfamily. In terms of assembly, heterotrimer of A, B and C subunits.

It carries out the reaction L-glutamyl-tRNA(Gln) + L-glutamine + ATP + H2O = L-glutaminyl-tRNA(Gln) + L-glutamate + ADP + phosphate + H(+). The catalysed reaction is L-aspartyl-tRNA(Asn) + L-glutamine + ATP + H2O = L-asparaginyl-tRNA(Asn) + L-glutamate + ADP + phosphate + 2 H(+). In terms of biological role, allows the formation of correctly charged Asn-tRNA(Asn) or Gln-tRNA(Gln) through the transamidation of misacylated Asp-tRNA(Asn) or Glu-tRNA(Gln) in organisms which lack either or both of asparaginyl-tRNA or glutaminyl-tRNA synthetases. The reaction takes place in the presence of glutamine and ATP through an activated phospho-Asp-tRNA(Asn) or phospho-Glu-tRNA(Gln). The polypeptide is Aspartyl/glutamyl-tRNA(Asn/Gln) amidotransferase subunit B (Streptococcus pneumoniae serotype 19F (strain G54)).